Here is a 350-residue protein sequence, read N- to C-terminus: MAGVKSLQPRLISSFLGNNSIRSTQPLIHLFRFDLGRRHVSMQLSRTFSGLTDLLFNRRNEDEVIDGKRKRLRPGNVSPRRPVPGHITKPPYVDSLQAPGISSGLEVHDKKGIECMRASGILAARVRDYAGTLVKPGVTTDEIDEAVHNMIIENGAYPSPLGYGGFPKSVCTSVNECICHGIPDSRPLEDGDIINIDVTVYLNGYHGDTSATFFCGNVDEKAKKLVEVTKESLDKAISICGPGVEYKKIGKVIHDLADKHKYGVVRQFVGHGVGSVFHADPVVLHFRNNEAGRMVLNQTFTIEPMLTIGSRNPIMWDDNWTVVTEDASLSAQFEHTILITKDGAEILTKC.

The N-terminal 49 residues, 1–49, are a transit peptide targeting the chloroplast and mitochondrion; that stretch reads MAGVKSLQPRLISSFLGNNSIRSTQPLIHLFRFDLGRRHVSMQLSRTFS. An N-acetylglycine modification is found at glycine 50. A disordered region spans residues 71 to 90; that stretch reads RLRPGNVSPRRPVPGHITKP. Residue histidine 180 coordinates substrate. Residues aspartate 197, aspartate 208, and histidine 271 each contribute to the a divalent metal cation site. Histidine 278 contacts substrate. Glutamate 303 and glutamate 334 together coordinate a divalent metal cation.

This sequence belongs to the peptidase M24A family. Methionine aminopeptidase type 1 subfamily. Co(2+) serves as cofactor. Requires Zn(2+) as cofactor. It depends on Mn(2+) as a cofactor. The cofactor is Fe(2+). Ubiquitous. Preferentially expressed in green tissues.

It is found in the plastid. The protein localises to the chloroplast. It localises to the mitochondrion. It carries out the reaction Release of N-terminal amino acids, preferentially methionine, from peptides and arylamides.. Its function is as follows. Removes the N-terminal methionine from nascent proteins. The N-terminal methionine is often cleaved when the second residue in the primary sequence is small and uncharged (Met-Ala-, Cys, Gly, Pro, Ser, Thr, or Val). The sequence is that of Methionine aminopeptidase 1D, chloroplastic/mitochondrial (MAP1D) from Arabidopsis thaliana (Mouse-ear cress).